A 310-amino-acid polypeptide reads, in one-letter code: MRRILTFFLGSIIIGLSIIISPSSSFAYPFWAQQNYENPREATGKLVCANCHLAKMTTQVEVPQSVGADSVFKAAVKIPYKPGTEEIGADGSKVPLQVGAVVMLPDGFKLAPQDRWTEDIKEETKGVYFTQYSEEKDNIILVGPLPGDQNKEIVFPILSPDPAKDKNIHFGKYSINVGGNRGRGQVYPTGEKSNNSIFTSTAAGLISTIEPNKDGGTNITIQTESGEAIIEEIPVGPSLVVKEGQTIDIGIPLTSDPNVGGFGQLDTEIVLQSPARVIGLIAFFAGVALTQILLVLKKKQVEKVQAAEGI.

A signal peptide spans 1 to 27 (MRRILTFFLGSIIIGLSIIISPSSSFA). Residues Y28, C48, C51, and H52 each contribute to the heme site. The chain crosses the membrane as a helical span at residues 277 to 297 (VIGLIAFFAGVALTQILLVLK).

This sequence belongs to the cytochrome f family. In terms of assembly, the 4 large subunits of the cytochrome b6-f complex are cytochrome b6, subunit IV (17 kDa polypeptide, PetD), cytochrome f and the Rieske protein, while the 4 small subunits are PetG, PetL, PetM and PetN. The complex functions as a dimer. Heme is required as a cofactor.

It localises to the cellular thylakoid membrane. In terms of biological role, component of the cytochrome b6-f complex, which mediates electron transfer between photosystem II (PSII) and photosystem I (PSI), cyclic electron flow around PSI, and state transitions. The chain is Cytochrome f from Prochlorococcus marinus (strain SARG / CCMP1375 / SS120).